The following is a 328-amino-acid chain: Flotillin-like protein FloA (328 aa).

The next 2 membrane-spanning stretches (helical) occupy residues 9–29 (LLIT…VPVG) and 30–50 (LWIS…IGMR).

This sequence belongs to the flotillin-like FloA family. Homooligomerizes.

The protein resides in the cell membrane. Its subcellular location is the membrane raft. In terms of biological role, found in functional membrane microdomains (FMM) that may be equivalent to eukaryotic membrane rafts. FMMs are highly dynamic and increase in number as cells age. Flotillins are thought to be important factors in membrane fluidity. The chain is Flotillin-like protein FloA from Exiguobacterium sp. (strain ATCC BAA-1283 / AT1b).